Here is a 78-residue protein sequence, read N- to C-terminus: NAD(P)H-quinone oxidoreductase subunit O (78 aa).

The protein belongs to the complex I NdhO subunit family. As to quaternary structure, NDH-1 can be composed of about 15 different subunits; different subcomplexes with different compositions have been identified which probably have different functions.

Its subcellular location is the cellular thylakoid membrane. The enzyme catalyses a plastoquinone + NADH + (n+1) H(+)(in) = a plastoquinol + NAD(+) + n H(+)(out). It carries out the reaction a plastoquinone + NADPH + (n+1) H(+)(in) = a plastoquinol + NADP(+) + n H(+)(out). Functionally, NDH-1 shuttles electrons from an unknown electron donor, via FMN and iron-sulfur (Fe-S) centers, to quinones in the respiratory and/or the photosynthetic chain. The immediate electron acceptor for the enzyme in this species is believed to be plastoquinone. Couples the redox reaction to proton translocation, and thus conserves the redox energy in a proton gradient. Cyanobacterial NDH-1 also plays a role in inorganic carbon-concentration. The chain is NAD(P)H-quinone oxidoreductase subunit O from Prochlorococcus marinus (strain MIT 9301).